Reading from the N-terminus, the 44-residue chain is uncharacterized protein (44 aa).

A helical membrane pass occupies residues 6-26 (SILIRGGGGVLIVLILLLWIV).

The protein resides in the membrane. This is an uncharacterized protein from Ornithodoros (relapsing fever ticks).